A 743-amino-acid polypeptide reads, in one-letter code: Zinc transporter ZIP6 (743 aa).

The N-terminal stretch at 1-20 (MARKLSVILILTFALSVTNP) is a signal peptide. Residues 21-313 (LHELKAAAFP…PKTYSLQIAW (293 aa)) lie on the Extracellular side of the membrane. N-linked (GlcNAc...) asparagine glycosylation is present at Asn-67. Over residues 96–116 (HEHHSDHEHHSDHEHHSDHEH) the composition is skewed to basic and acidic residues. 2 disordered regions span residues 96 to 174 (HEHH…SASE) and 190 to 245 (LETI…SRNT). The segment covering 117–132 (HSHRNHAASGKNKRKA) has biased composition (basic residues). Composition is skewed to basic and acidic residues over residues 133 to 147 (LCPDHDSDSSGKDPR) and 155 to 167 (HRSEHASGRRNVK). Positions 206-215 (VSSSTPPSVT) are enriched in polar residues. The span at 227 to 237 (KTNESVSEPRK) shows a compositional bias: basic and acidic residues. Residues Asn-229, Asn-254, and Asn-271 are each glycosylated (N-linked (GlcNAc...) asparagine). Residues 314-334 (VGGFIAISIISFLSLLGVILV) traverse the membrane as a helical segment. Topologically, residues 335 to 343 (PLMNRVFFK) are cytoplasmic. A helical transmembrane segment spans residues 344–364 (FLLSFLVALAVGTLSGDAFLH). Residues 365-411 (LLPHSHASHHHSHSHEEPAMEMKRGPLFSHLSSQNIEESAYFDSTWK) are Extracellular-facing. Residues 412-432 (GLTALGGLYFMFLVEHVLTLI) traverse the membrane as a helical segment. Residues 433 to 645 (KQFKDKKKKN…LKAGMTVKQA (213 aa)) are Cytoplasmic-facing. Residues 452–474 (VEIKKQLSKYESQLSTNEEKVDT) are a coiled coil. Phosphoserine occurs at positions 459 and 466. The helical transmembrane segment at 646-666 (VLYNALSAMLAYLGMATGIFI) threads the bilayer. Topologically, residues 667 to 674 (GHYAENVS) are extracellular. Asn-672 carries N-linked (GlcNAc...) asparagine glycosylation. A helical membrane pass occupies residues 675–695 (MWIFALTAGLFMYVALVDMVP). Residues 696–712 (EMLHNDASDHGCSRWGY) lie on the Cytoplasmic side of the membrane. The helical transmembrane segment at 713 to 733 (FFLQNAGMLLGFGIMLLISIF) threads the bilayer. At 734 to 743 (EHKIVFRINF) the chain is on the extracellular side.

Belongs to the ZIP transporter (TC 2.A.5) family. As to quaternary structure, interacts with SLC39A10; which triggers cells to undergo EMT and mitosis. Found in a complex with SLC39A6, SLC39A10 and with the 'Ser-727' phosphorylated form of STAT3 throughout mitosis. Found in a complex with SLC39A6, SLC39A10 and with NCAM1; this complex controls NCAM1 phosphorylation and integration into focal adhesion complexes during epithelial-to-mesenchymal transition (EMT). Found in a complex with SLC39A6, SLC39A10 and with GSK3B that controls NCAM1 phosphorylation. In terms of processing, cleaved on the N-terminus before locating to the plasma membrane. Post-translationally, N-glycosylated. Phosphorylated by ZAP70 in response to TCR stimulation leading to its activation.

It localises to the cell membrane. The protein resides in the cell projection. It is found in the lamellipodium membrane. Its subcellular location is the membrane raft. The protein localises to the apical cell membrane. The catalysed reaction is Zn(2+)(in) = Zn(2+)(out). Its function is as follows. Zinc-influx transporter which plays a role in zinc homeostasis and in the induction of epithelial-to-mesenchymal transition (EMT). When associated with SLC39A10, the heterodimer formed by SLC39A10 and SLC39A6 mediates cellular zinc uptake to trigger cells to undergo epithelial- to-mesenchymal transition (EMT). The SLC39A10-SLC39A6 heterodimer also controls NCAM1 phosphorylation and its integration into focal adhesion complexes during EMT. Zinc influx inactivates GSK3B, enabling unphosphorylated SNAI1 in the nucleus to down-regulate adherence genes such as CDH1, causing loss of cell adherence. In addition, the SLC39A10-SLC39A6 heterodimer plays an essentiel role in initiating mitosis by importing zinc into cells to initiate a pathway resulting in the onset of mitosis. Participates in the T-cell receptor signaling regulation by mediating cellular zinc uptake into activated lymphocytes. Regulates the zinc influx necessary for proper meiotic progression to metaphase II (MII) that allows the oocyte-to-egg transition. The sequence is that of Zinc transporter ZIP6 from Pongo abelii (Sumatran orangutan).